The primary structure comprises 330 residues: uncharacterized protein (330 aa).

A run of 10 helical transmembrane segments spans residues 27–47 (MGAYVSLAAAMAIVGSSVVVG), 56–76 (VFLSSGLRFLIASVVLLMLLF), 90–110 (VFVLLVQSFTGVFLFSICLLY), 119–139 (ESGILTSTTPMLIGILSFFLL), 147–167 (TLIGILLAVCGVMAINLFGAG), 176–196 (LFGNMLIIAAVIGEALFTLMA), 206–226 (LAISTFVSLFGFLFFLPFALF), 243–263 (YVLYYALFVTVLAFYLWYSGV), 270–290 (VSGIFTSVLPVSAVILSGVIL), and 294–314 (FEFVHFIGIACVIGGIFVTVI). EamA domains are found at residues 38–163 (AIVG…AINL) and 187–314 (IGEA…VTVI).

This sequence belongs to the EamA transporter family.

The protein resides in the cell membrane. This is an uncharacterized protein from Bacillus subtilis (strain 168).